We begin with the raw amino-acid sequence, 628 residues long: 3-hydroxy-3-methylglutaryl-coenzyme A reductase 2 (628 aa).

The next 2 helical transmembrane spans lie at 38 to 58 and 78 to 98; these read PLYL…YFLL and EIVA…FFGI. Residues 99 to 212 form a linker region; it reads DFVQSLIIRP…HEKTVIVTTE (114 aa). Asn-153 carries N-linked (GlcNAc...) asparagine glycosylation. The catalytic stretch occupies residues 213 to 628; sequence EDEEIIKSVV…SSKDMSNLSS (416 aa). The active-site Charge relay system is the Glu-307. Asn-371 carries an N-linked (GlcNAc...) asparagine glycan. Lys-439 serves as the catalytic Charge relay system. N-linked (GlcNAc...) asparagine glycosylation occurs at Asn-484. Catalysis depends on Asp-515, which acts as the Charge relay system. His-613 functions as the Proton donor in the catalytic mechanism. N-linked (GlcNAc...) asparagine glycans are attached at residues Asn-617 and Asn-625.

It belongs to the HMG-CoA reductase family.

It is found in the endoplasmic reticulum membrane. Its subcellular location is the mitochondrion membrane. The protein resides in the plastid membrane. It carries out the reaction (R)-mevalonate + 2 NADP(+) + CoA = (3S)-3-hydroxy-3-methylglutaryl-CoA + 2 NADPH + 2 H(+). Its pathway is metabolic intermediate biosynthesis; (R)-mevalonate biosynthesis; (R)-mevalonate from acetyl-CoA: step 3/3. Its function is as follows. Catalyzes the synthesis of mevalonate. The specific precursor of all isoprenoid compounds present in plants. The protein is 3-hydroxy-3-methylglutaryl-coenzyme A reductase 2 (HMG2) of Gossypium hirsutum (Upland cotton).